A 210-amino-acid polypeptide reads, in one-letter code: uncharacterized protein (210 aa).

The N-terminal stretch at 1–17 (MKRTAVSLCLLTGLLSG) is a signal peptide. A lipid anchor (N-palmitoyl cysteine) is attached at C18. C18 carries the S-diacylglycerol cysteine lipid modification. The segment covering 176–195 (EMKTSPQGSPVSENENANGE) has biased composition (polar residues). Residues 176–210 (EMKTSPQGSPVSENENANGETRQDMKIDRNDKNAR) are disordered. A compositionally biased stretch (basic and acidic residues) spans 196–210 (TRQDMKIDRNDKNAR).

It localises to the cell membrane. This is an uncharacterized protein from Bacillus subtilis (strain 168).